A 158-amino-acid polypeptide reads, in one-letter code: UPF0225 protein Pfl01_1218 (158 aa).

This sequence belongs to the UPF0225 family.

The sequence is that of UPF0225 protein Pfl01_1218 from Pseudomonas fluorescens (strain Pf0-1).